Here is a 416-residue protein sequence, read N- to C-terminus: Enterobactin exporter EntS (416 aa).

At methionine 1–alanine 21 the chain is on the cytoplasmic side. The chain crosses the membrane as a helical span at residues valine 22–valine 42. At glutamine 43–glycine 55 the chain is on the periplasmic side. Residues leucine 56 to alanine 76 traverse the membrane as a helical segment. Residues aspartate 77–lysine 83 lie on the Cytoplasmic side of the membrane. The chain crosses the membrane as a helical span at residues valine 84–leucine 104. Residues leucine 105 to serine 109 lie on the Periplasmic side of the membrane. The helical transmembrane segment at leucine 110–alanine 130 threads the bilayer. At leucine 131–arginine 156 the chain is on the cytoplasmic side. The helical transmembrane segment at leucine 157–tryptophan 177 threads the bilayer. A topological domain (periplasmic) is located at residue asparagine 178. Residues tyrosine 179–leucine 199 form a helical membrane-spanning segment. Over proline 200 to arginine 218 the chain is Cytoplasmic. Residues phenylalanine 219–alanine 239 traverse the membrane as a helical segment. Residues serine 240–serine 256 are Periplasmic-facing. The chain crosses the membrane as a helical span at residues alanine 257–threonine 277. The Cytoplasmic portion of the chain corresponds to serine 278–proline 287. The helical transmembrane segment at glycine 288–leucine 307 threads the bilayer. Residues methionine 308–leucine 313 lie on the Periplasmic side of the membrane. The chain crosses the membrane as a helical span at residues glycine 314–leucine 336. The Cytoplasmic portion of the chain corresponds to glutamine 337–asparagine 356. The helical transmembrane segment at valine 357 to valine 377 threads the bilayer. Alanine 378 is a topological domain (periplasmic). The chain crosses the membrane as a helical span at residues serine 379–valine 399. Topologically, residues glutamate 400–serine 416 are cytoplasmic.

The protein belongs to the major facilitator superfamily. EntS (TC 2.A.1.38) family.

It is found in the cell inner membrane. Its function is as follows. Component of an export pathway for enterobactin. This is Enterobactin exporter EntS from Escherichia coli O45:K1 (strain S88 / ExPEC).